A 375-amino-acid polypeptide reads, in one-letter code: Alpha-2,8-sialyltransferase 8B (375 aa).

Residues 1 to 6 lie on the Cytoplasmic side of the membrane; sequence MQLQFR. A helical; Signal-anchor for type II membrane protein transmembrane segment spans residues 7-23; it reads SWMLAALTLLVVFLIFA. Over 24 to 375 the chain is Lumenal; it reads DISEIEEEIG…LTVGQCDGAT (352 aa). N-linked (GlcNAc...) asparagine glycosylation is found at Asn60, Asn72, Asn89, and Asn134. Intrachain disulfides connect Cys157–Cys307 and Cys171–Cys371. Residues Asn162 and Asn185 each coordinate CMP-N-acetyl-beta-neuraminate. N-linked (GlcNAc...) asparagine glycosylation is found at Asn219 and Asn234. Residues Thr294, Thr295, Gly296, Trp316, Tyr329, and His330 each contribute to the CMP-N-acetyl-beta-neuraminate site. The active-site Proton donor/acceptor is His346.

It belongs to the glycosyltransferase 29 family. Post-translationally, autopolysialylated. Autopolysialylation is not a prerequisite for the polysialylation acitity, but enhances the polysialylation acitity. As to expression, highly expressed in fetal brain, kidney and heart and to a much lesser extent in adult heart and thymus.

It is found in the golgi apparatus membrane. Its subcellular location is the secreted. The protein localises to the cell membrane. The enzyme catalyses [N-acetyl-alpha-D-neuraminosyl-(2-&gt;8)](n) + CMP-N-acetyl-beta-neuraminate = [N-acetyl-alpha-D-neuraminosyl-(2-&gt;8)](n+1) + CMP + H(+). It participates in protein modification; protein glycosylation. Functionally, catalyzes the transfer of a sialic acid from a CMP-linked sialic acid donor onto a terminal alpha-2,3-, alpha-2,6-, or alpha-2,8-linked sialic acid of an N-linked glycan acceptor through alpha-2,8-linkages. Therefore, participates in polysialic acid synthesis on various sialylated N-acetyllactosaminyl oligosaccharides (alpha-2,3-, alpha-2,6-, or alpha-2,8-linked sialic acid), including NCAM1, NCAM1 N-glycans, FETUB N-glycans, and to a lesser extent sialylparagloboside (SPG) and AHSG, which does not require the initial addition of an alpha 2,8-sialic acid. However, does not exhibit sialic acid-polymerase activity. Catalyzes polysialic acid synthesis in the hippocampal on NCAM1 and supports neurite outgrowth. ST8SIA2-mediated polysialylation influences on oligodendrocyte differentiation and may promote the integrity of myelin and axons. This chain is Alpha-2,8-sialyltransferase 8B, found in Homo sapiens (Human).